The primary structure comprises 149 residues: SsrA-binding protein (149 aa).

The segment at 121–149 (GKKQHDKRADELDKDSKREAQRAMKERQR) is disordered. Positions 127–149 (KRADELDKDSKREAQRAMKERQR) are enriched in basic and acidic residues.

It belongs to the SmpB family.

It is found in the cytoplasm. Required for rescue of stalled ribosomes mediated by trans-translation. Binds to transfer-messenger RNA (tmRNA), required for stable association of tmRNA with ribosomes. tmRNA and SmpB together mimic tRNA shape, replacing the anticodon stem-loop with SmpB. tmRNA is encoded by the ssrA gene; the 2 termini fold to resemble tRNA(Ala) and it encodes a 'tag peptide', a short internal open reading frame. During trans-translation Ala-aminoacylated tmRNA acts like a tRNA, entering the A-site of stalled ribosomes, displacing the stalled mRNA. The ribosome then switches to translate the ORF on the tmRNA; the nascent peptide is terminated with the 'tag peptide' encoded by the tmRNA and targeted for degradation. The ribosome is freed to recommence translation, which seems to be the essential function of trans-translation. The polypeptide is SsrA-binding protein (Dechloromonas aromatica (strain RCB)).